A 268-amino-acid polypeptide reads, in one-letter code: Tryptophan synthase alpha chain (268 aa).

Active-site proton acceptor residues include glutamate 49 and aspartate 60.

This sequence belongs to the TrpA family. Tetramer of two alpha and two beta chains.

The enzyme catalyses (1S,2R)-1-C-(indol-3-yl)glycerol 3-phosphate + L-serine = D-glyceraldehyde 3-phosphate + L-tryptophan + H2O. It participates in amino-acid biosynthesis; L-tryptophan biosynthesis; L-tryptophan from chorismate: step 5/5. The alpha subunit is responsible for the aldol cleavage of indoleglycerol phosphate to indole and glyceraldehyde 3-phosphate. The chain is Tryptophan synthase alpha chain from Haemophilus influenzae (strain PittGG).